A 194-amino-acid chain; its full sequence is Ribonuclease HII (194 aa).

The 194-residue stretch at 1-194 (MTVGVDEVGR…RLFPRDDGLR (194 aa)) folds into the RNase H type-2 domain. 3 residues coordinate a divalent metal cation: Asp6, Glu7, and Asp102.

This sequence belongs to the RNase HII family. It depends on Mn(2+) as a cofactor. The cofactor is Mg(2+).

It is found in the cytoplasm. The catalysed reaction is Endonucleolytic cleavage to 5'-phosphomonoester.. Its function is as follows. Endonuclease that specifically degrades the RNA of RNA-DNA hybrids. The polypeptide is Ribonuclease HII (Synechococcus sp. (strain WH7803)).